A 479-amino-acid polypeptide reads, in one-letter code: Glutamate--tRNA ligase 2 (479 aa).

The 'HIGH' region signature appears at 18–28; that stretch reads PSPTGFLHIGG. The short motif at 244–248 is the 'KMSKS' region element; sequence KLSKR. Position 247 (K247) interacts with ATP.

The protein belongs to the class-I aminoacyl-tRNA synthetase family. Glutamate--tRNA ligase type 1 subfamily. As to quaternary structure, monomer.

Its subcellular location is the cytoplasm. The enzyme catalyses tRNA(Glu) + L-glutamate + ATP = L-glutamyl-tRNA(Glu) + AMP + diphosphate. In terms of biological role, catalyzes the attachment of glutamate to tRNA(Glu) in a two-step reaction: glutamate is first activated by ATP to form Glu-AMP and then transferred to the acceptor end of tRNA(Glu). This is Glutamate--tRNA ligase 2 from Maricaulis maris (strain MCS10) (Caulobacter maris).